The following is a 219-amino-acid chain: Dual specificity phosphatase 29 (219 aa).

A Tyrosine-protein phosphatase domain is found at 53–201; that stretch reads HVNEVWPKLY…LRELDRQLVQ (149 aa). A substrate-binding site is contributed by 145–152; the sequence is HCVMGRSR. Catalysis depends on Cys146, which acts as the Phosphocysteine intermediate.

Belongs to the protein-tyrosine phosphatase family. Non-receptor class dual specificity subfamily. As to quaternary structure, homodimer. Interacts with PRKAA2.

It is found in the cytoplasm. It localises to the nucleus. It catalyses the reaction O-phospho-L-tyrosyl-[protein] + H2O = L-tyrosyl-[protein] + phosphate. It carries out the reaction O-phospho-L-seryl-[protein] + H2O = L-seryl-[protein] + phosphate. The enzyme catalyses O-phospho-L-threonyl-[protein] + H2O = L-threonyl-[protein] + phosphate. Functionally, dual specificity phosphatase able to dephosphorylate phosphotyrosine, phosphoserine and phosphothreonine residues within the same substrate, with a preference for phosphotyrosine as a substrate. Involved in the modulation of intracellular signaling cascades. May regulate glucose metabolism by activating, AMPK, an energy sensor protein kinase. Affects MAP kinase signaling though modulation of the ERK1/2 cascade in skeletal muscle promoting muscle cell differentiation, development and atrophy. This chain is Dual specificity phosphatase 29 (DUSP29), found in Bos taurus (Bovine).